The sequence spans 263 residues: Putative TATA-binding protein pB263R (263 aa).

It belongs to the asfivirus B263R family.

In terms of biological role, putative TATA-binding protein. The protein is Putative TATA-binding protein pB263R of African swine fever virus (isolate Pig/Kenya/KEN-50/1950) (ASFV).